A 298-amino-acid polypeptide reads, in one-letter code: Acetylglutamate kinase (298 aa).

Residues 69-70, R91, and N191 each bind substrate; that span reads GG.

Belongs to the acetylglutamate kinase family. ArgB subfamily.

The protein localises to the cytoplasm. It catalyses the reaction N-acetyl-L-glutamate + ATP = N-acetyl-L-glutamyl 5-phosphate + ADP. It functions in the pathway amino-acid biosynthesis; L-arginine biosynthesis; N(2)-acetyl-L-ornithine from L-glutamate: step 2/4. In terms of biological role, catalyzes the ATP-dependent phosphorylation of N-acetyl-L-glutamate. The chain is Acetylglutamate kinase from Neisseria meningitidis serogroup C (strain 053442).